A 189-amino-acid polypeptide reads, in one-letter code: Resolvase (189 aa).

The Resolvase/invertase-type recombinase catalytic domain maps to 1 to 139; sequence MLVGYARVST…EGLRSAKARG (139 aa). Serine 9 (O-(5'-phospho-DNA)-serine intermediate) is an active-site residue. The disordered stretch occupies residues 130–151; the sequence is EGLRSAKARGRNGGRPSKRNDK. A DNA-binding region (H-T-H motif) is located at residues 165–184; the sequence is IVDIVKQTELSRATVYRILK.

The protein belongs to the site-specific recombinase resolvase family.

Its function is as follows. A likely role for the res protein would be to stabilize pCP13 by reducing the number of plasmid multimers resulting from homologous recombination. This Clostridium perfringens (strain 13 / Type A) protein is Resolvase (res).